A 71-amino-acid chain; its full sequence is Conotoxin Pl071 (71 aa).

Positions 1–20 are cleaved as a signal peptide; sequence MSRLFMILLVICVITLGTDA. The propeptide occupies 21 to 31; the sequence is SQAEDSGTEKR. The residue at position 69 (tyrosine 69) is a Tyrosine amide.

The protein belongs to the conotoxin NSf-1 superfamily. In terms of tissue distribution, expressed by the venom duct.

The protein localises to the secreted. In terms of biological role, probable neurotoxin with unknown target. Possibly targets ion channels. The polypeptide is Conotoxin Pl071 (Conus planorbis (Planorbis cone)).